We begin with the raw amino-acid sequence, 332 residues long: DGAT1/2-independent enzyme synthesizing storage lipids (332 aa).

Residues 1–10 (MIGSNESSTE) are Lumenal-facing. Residue Asn-5 is glycosylated (N-linked (GlcNAc...) asparagine). Residues 11–31 (GPIPTSYLSFLAYLLGEWTGV) form a helical membrane-spanning segment. The Cytoplasmic segment spans residues 32–45 (EHTEDYLSYGAYLS). The helical transmembrane segment at 46–66 (WVLFPLAIVFILPVAIFFFCF) threads the bilayer. Residues 67 to 332 (NTSLLLLHIY…ERFQTRQKED (266 aa)) lie on the Lumenal side of the membrane. Residue His-132 is part of the active site. Asn-289 carries an N-linked (GlcNAc...) asparagine glycan.

The protein belongs to the diacylglycerol acyltransferase family. Highly divergent.

It localises to the endoplasmic reticulum membrane. It carries out the reaction a 1,2-diacylglycerol + a 1,2-diacyl-sn-glycero-3-phosphocholine = a triacylglycerol + a 1-acyl-sn-glycero-3-phosphocholine. It catalyses the reaction a 1-O-alkyl-2-acyl-sn-glycero-3-phosphocholine + a 1,2-diacylglycerol = a 1-O-alkyl-sn-glycero-3-phosphocholine + a triacylglycerol. The catalysed reaction is a 2-acylglycerol + an acyl-CoA = a 1,2-diacylglycerol + CoA. The enzyme catalyses an acyl-CoA + a 1,2-diacyl-sn-glycerol = a triacyl-sn-glycerol + CoA. It carries out the reaction 2-(9Z-octadecenoyl)-glycerol + (9Z)-octadecenoyl-CoA = 1,2-di-(9Z-octadecenoyl)-glycerol + CoA. It catalyses the reaction 1,2-di-(9Z-octadecenoyl)-sn-glycerol + (9Z)-octadecenoyl-CoA = 1,2,3-tri-(9Z-octadecenoyl)-glycerol + CoA. Its function is as follows. Catalytic subunit of the alternative triglyceride biosynthesis pathway, which mediates formation of triacylglycerol from diacylglycerol and membrane phospholipids. Synthesizes triacylglycerol at the expense of membrane phospholipids, such as phosphatidylcholine (PC) and its ether-linked form (ePC), thereby altering the composition of membranes. The alternative triglyceride biosynthesis pathway is probably required to provide the energy required for rapid growth when fuel sources are limiting. It maintains mitochondrial function during periods of extracellular lipid starvation. Can also use acyl-CoA as donor: acts as a acyl-CoA:monoacylglycerol acyltransferase (MGAT), but also shows acyl-CoA:diacylglycerol acyltransferase (DGAT) activity. This chain is DGAT1/2-independent enzyme synthesizing storage lipids (TMEM68), found in Gallus gallus (Chicken).